The chain runs to 72 residues: Large ribosomal subunit protein uL29 (72 aa).

The protein belongs to the universal ribosomal protein uL29 family.

The polypeptide is Large ribosomal subunit protein uL29 (Chlamydia caviae (strain ATCC VR-813 / DSM 19441 / 03DC25 / GPIC) (Chlamydophila caviae)).